The primary structure comprises 503 residues: Legumin J (503 aa).

An N-terminal signal peptide occupies residues 1–22 (MSKPFLSLLSLSLLLFASACLA). Disulfide bonds link Cys-33–Cys-66 and Cys-109–Cys-329. One can recognise a Cupin type-1 1 domain in the interval 38 to 257 (INALEPDHRV…TFNTEEDTAK (220 aa)). Disordered stretches follow at residues 111 to 140 (ETYE…RRFR), 185 to 235 (FYLG…EGNS), and 253 to 323 (EDTA…RKNG). The span at 118–129 (SSQSRQESRQQQ) shows a compositional bias: low complexity. 2 stretches are compositionally biased toward basic and acidic residues: residues 254–268 (DTAK…ERSQ) and 282–300 (KGKE…HREE). Residues 301–312 (KEEEEEEEEDEE) are compositionally biased toward acidic residues. Over residues 313 to 323 (EKQRSEERKNG) the composition is skewed to basic and acidic residues. The region spanning 335–482 (ENIADAARAD…AFGLRQRQVT (148 aa)) is the Cupin type-1 2 domain.

It belongs to the 11S seed storage protein (globulins) family. In terms of assembly, hexamer; each subunit is composed of an acidic and a basic chain derived from a single precursor and linked by a disulfide bond.

In terms of biological role, this protein found in the seeds of many leguminous and non-leguminous plants is the source of sulfur-containing amino acids in seed meals. The protein is Legumin J (LEGJ) of Pisum sativum (Garden pea).